Consider the following 191-residue polypeptide: Protein GrpE (191 aa).

It belongs to the GrpE family. In terms of assembly, homodimer.

Its subcellular location is the cytoplasm. In terms of biological role, participates actively in the response to hyperosmotic and heat shock by preventing the aggregation of stress-denatured proteins, in association with DnaK and GrpE. It is the nucleotide exchange factor for DnaK and may function as a thermosensor. Unfolded proteins bind initially to DnaJ; upon interaction with the DnaJ-bound protein, DnaK hydrolyzes its bound ATP, resulting in the formation of a stable complex. GrpE releases ADP from DnaK; ATP binding to DnaK triggers the release of the substrate protein, thus completing the reaction cycle. Several rounds of ATP-dependent interactions between DnaJ, DnaK and GrpE are required for fully efficient folding. The polypeptide is Protein GrpE (Helicobacter pylori (strain P12)).